The chain runs to 348 residues: Dihydroorotase (348 aa).

Histidine 17 and histidine 19 together coordinate Zn(2+). Substrate contacts are provided by residues 19 to 21 and asparagine 45; that span reads HLR. Zn(2+) is bound by residues lysine 103, histidine 140, and histidine 178. The residue at position 103 (lysine 103) is an N6-carboxylysine. Histidine 140 is a binding site for substrate. Leucine 223 provides a ligand contact to substrate. Aspartate 251 is a binding site for Zn(2+). Aspartate 251 is a catalytic residue. Residues histidine 255 and alanine 267 each coordinate substrate.

It belongs to the metallo-dependent hydrolases superfamily. DHOase family. Class II DHOase subfamily. Homodimer. It depends on Zn(2+) as a cofactor.

The enzyme catalyses (S)-dihydroorotate + H2O = N-carbamoyl-L-aspartate + H(+). The protein operates within pyrimidine metabolism; UMP biosynthesis via de novo pathway; (S)-dihydroorotate from bicarbonate: step 3/3. Catalyzes the reversible cyclization of carbamoyl aspartate to dihydroorotate. This is Dihydroorotase from Salmonella newport (strain SL254).